We begin with the raw amino-acid sequence, 117 residues long: Immunoglobulin heavy variable 3-5 (117 aa).

A signal peptide spans 1-18 (MKMFTLLYLLTVVPGILS). An Ig-like domain is found at 19–117 (DVQLQESGPG…EDTATYYCAR (99 aa)). Cys40 and Cys115 are oxidised to a cystine.

The polypeptide is Immunoglobulin heavy variable 3-5 (Mus musculus (Mouse)).